Here is a 364-residue protein sequence, read N- to C-terminus: MPGNSFGHVFRLTTWGESHGPAVGCTVDGCPAGLPLDVADIQRELDRRRVGQSRVSSQRREADEVQILSGVFEGRTTGTPITMVVYNTDAKSHHYDTIKDAYRPGHADYTWDVKYGFRDWRGGGRSSARETIGRVAGGAIARKLLATVGVTIVGYTLQLADLRAEVFDEAEIERNIMRCPDARVAALMVERVDQARRELDSLGGIVEVRARGVPPGLGEPVFDKLQADIGKAMFSIPAIKGVEIGEGFGVAMLRGSQNNDPFIRREDGSIGTTSNHHGGILGGISTGEEIVVRLAAKPPASIARPQQTVDRDGNPVTIEVHGRHDPTVLPRLVPVAEAMLALVLADHLLRQRLARVSWSERDDG.

Residues Arg48 and Arg54 each coordinate NADP(+). FMN is bound by residues 125–127 (RSS), Gly282, 297–301 (KPPAS), and Arg323.

The protein belongs to the chorismate synthase family. As to quaternary structure, homotetramer. FMNH2 serves as cofactor.

It catalyses the reaction 5-O-(1-carboxyvinyl)-3-phosphoshikimate = chorismate + phosphate. The protein operates within metabolic intermediate biosynthesis; chorismate biosynthesis; chorismate from D-erythrose 4-phosphate and phosphoenolpyruvate: step 7/7. Its function is as follows. Catalyzes the anti-1,4-elimination of the C-3 phosphate and the C-6 proR hydrogen from 5-enolpyruvylshikimate-3-phosphate (EPSP) to yield chorismate, which is the branch point compound that serves as the starting substrate for the three terminal pathways of aromatic amino acid biosynthesis. This reaction introduces a second double bond into the aromatic ring system. In Chloroflexus aggregans (strain MD-66 / DSM 9485), this protein is Chorismate synthase.